The chain runs to 689 residues: MAIDRRREAAGSGAGRQPAPAEENGSLPPGDAAASAPLGGRAGSGSSAEIQPLPALHPSGGPHSSCCAATAAPSLLLLDYDGSVLPFLGGLGGGYQKTLVVLTWIPALFIGFSQFSDSFLLDQPDFWCRGAGKGTELAGATVTGRWGDMGNWTSPSATPFSTASWGTTSNRSNSSDTPPLPSPPGKGNNDSNCDCHAWDYGIRTGLIQNVVSKWDLVCDNTWKVHIAKFSLLVGLIFGYLITGCIADWVGRRPVLLFSTIFILIFGLTVALSVNVTMFSTLRFFEGFCLAGIILTLYALRIELCPPGKRFIITMVASFVAMAGQFLMPGLAALCRDWQVLQALIICPFLLMLLYWSIFPESLRWLMATQQFESAKKLILYLTQKNCVSPESDIKGVMPELEKELSRRPKKVCIVKVVGTRNLWKNIVVLCVNSLTGYGIHHCFARSMMGHEVKVPLLENFYADYYTMASIALASCLAMCLVVKFLGRRGGLLLFMILTALASLLQLGLLNLIGKYSQHPDSELQLKLAVGMSDSVKDKFSIAFSIVGMFASHAVGSLSVFFCAEITPTVIRCGGLGLVLASAGFGMLTAPIIELHNQKGYFLHHIIFACCTLICIICILLLPESRNQNLPENIANGEHYTRQPLLPHKKGEQPLLLTNAELKDYSGLHDVAAVGDGLPEGATANGMKTM.

2 disordered regions span residues 1–55 and 162–188; these read MAID…PLPA and TASW…GKGN. N-linked (GlcNAc...) asparagine glycosylation occurs at asparagine 24. Positions 165-177 are enriched in polar residues; sequence WGTTSNRSNSSDT. 2 consecutive transmembrane segments (helical) span residues 229–249 and 253–273; these read FSLL…ADWV and PVLL…ALSV. Asparagine 274 carries an N-linked (GlcNAc...) asparagine glycan. The next 8 membrane-spanning stretches (helical) occupy residues 283–303, 310–330, 339–359, 466–486, 489–509, 541–561, 572–592, and 601–621; these read FFEG…RIEL, FIIT…MPGL, VLQA…SIFP, TMAS…KFLG, GGLL…LGLL, IAFS…SVFF, CGGL…APII, and FLHH…ILLL.

This sequence belongs to the major facilitator (TC 2.A.1) superfamily. Organic cation transporter (TC 2.A.1.19) family.

The protein resides in the membrane. The protein is Solute carrier family 22 member 23 (Slc22a23) of Mus musculus (Mouse).